The primary structure comprises 447 residues: Gamma-glutamyl phosphate reductase (447 aa).

This sequence belongs to the gamma-glutamyl phosphate reductase family.

The protein localises to the cytoplasm. The enzyme catalyses L-glutamate 5-semialdehyde + phosphate + NADP(+) = L-glutamyl 5-phosphate + NADPH + H(+). It functions in the pathway amino-acid biosynthesis; L-proline biosynthesis; L-glutamate 5-semialdehyde from L-glutamate: step 2/2. In terms of biological role, catalyzes the NADPH-dependent reduction of L-glutamate 5-phosphate into L-glutamate 5-semialdehyde and phosphate. The product spontaneously undergoes cyclization to form 1-pyrroline-5-carboxylate. The sequence is that of Gamma-glutamyl phosphate reductase from Methanosarcina barkeri (strain Fusaro / DSM 804).